A 334-amino-acid chain; its full sequence is Dihydroorotate dehydrogenase (quinone) (334 aa).

FMN-binding positions include 59–63 (AGLDK) and Thr-83. Position 63 (Lys-63) interacts with substrate. Residue 108–112 (NRMGF) participates in substrate binding. Positions 136 and 169 each coordinate FMN. Asn-169 is a substrate binding site. Ser-172 (nucleophile) is an active-site residue. Asn-174 provides a ligand contact to substrate. Residues Lys-214 and Thr-242 each coordinate FMN. Position 243 to 244 (243 to 244 (NT)) interacts with substrate. FMN contacts are provided by residues Gly-265, Gly-294, and 315 to 316 (YS).

This sequence belongs to the dihydroorotate dehydrogenase family. Type 2 subfamily. In terms of assembly, monomer. Requires FMN as cofactor.

It is found in the cell membrane. It carries out the reaction (S)-dihydroorotate + a quinone = orotate + a quinol. The protein operates within pyrimidine metabolism; UMP biosynthesis via de novo pathway; orotate from (S)-dihydroorotate (quinone route): step 1/1. Its function is as follows. Catalyzes the conversion of dihydroorotate to orotate with quinone as electron acceptor. This Acinetobacter baumannii (strain SDF) protein is Dihydroorotate dehydrogenase (quinone).